A 326-amino-acid chain; its full sequence is MVSQTVSVAVTGGTGQIAYSFLFSLAHGDVFGLDCGIDLRIYDIPGTERALSGVRMELDDGAFPLLQRVQVTTSLHDAFDGIDAAFLIGSVPRGPGVERRDLLKKNGEIFATQGKALNTTAKRDAKIFVVGNPVNTNCWIAMNHAPRLLRKNFHAMLRLDQNRMHSMLSHRAEVPLSAVSQVVVWGNHSAKQVPDFTQALINDRPIAETIADRDWLENIMVPSVQSRGSAVIEARGKSSAASAARALAEAARSIYQPKEGEWFSSGVCSDHNPYGLPEDLIFGFPCRMLATGEYEVIPRLPWDAFIRGKMQISLDEILQEKASVSL.

12-18 (GGTGQIA) contributes to the NAD(+) binding site. Residues arginine 93 and arginine 99 each coordinate substrate. NAD(+)-binding positions include asparagine 106, glutamine 113, and 130 to 132 (VGN). 2 residues coordinate substrate: asparagine 132 and arginine 163. Histidine 188 serves as the catalytic Proton acceptor.

Belongs to the LDH/MDH superfamily. MDH type 2 family.

It carries out the reaction (S)-malate + NAD(+) = oxaloacetate + NADH + H(+). Functionally, catalyzes the reversible oxidation of malate to oxaloacetate. This chain is Malate dehydrogenase, found in Chlamydia trachomatis serovar A (strain ATCC VR-571B / DSM 19440 / HAR-13).